The chain runs to 123 residues: Large ribosomal subunit protein uL14 (123 aa).

It belongs to the universal ribosomal protein uL14 family. Part of the 50S ribosomal subunit. Forms a cluster with proteins L3 and L19. In the 70S ribosome, L14 and L19 interact and together make contacts with the 16S rRNA in bridges B5 and B8.

Its function is as follows. Binds to 23S rRNA. Forms part of two intersubunit bridges in the 70S ribosome. The chain is Large ribosomal subunit protein uL14 from Chromohalobacter salexigens (strain ATCC BAA-138 / DSM 3043 / CIP 106854 / NCIMB 13768 / 1H11).